The sequence spans 410 residues: 3-phosphoshikimate 1-carboxyvinyltransferase (410 aa).

The 3-phosphoshikimate site is built by Lys-21, Ser-22, and Arg-26. Lys-21 serves as a coordination point for phosphoenolpyruvate. 2 residues coordinate phosphoenolpyruvate: Gly-69 and Arg-97. 3-phosphoshikimate is bound by residues Ser-143, Ser-144, Gln-145, Ser-171, Asp-288, and Lys-315. Gln-145 is a phosphoenolpyruvate binding site. Residue Asp-288 is the Proton acceptor of the active site. Residues Arg-319, Arg-364, and Lys-389 each coordinate phosphoenolpyruvate.

Belongs to the EPSP synthase family. In terms of assembly, monomer.

It is found in the cytoplasm. It carries out the reaction 3-phosphoshikimate + phosphoenolpyruvate = 5-O-(1-carboxyvinyl)-3-phosphoshikimate + phosphate. It participates in metabolic intermediate biosynthesis; chorismate biosynthesis; chorismate from D-erythrose 4-phosphate and phosphoenolpyruvate: step 6/7. Functionally, catalyzes the transfer of the enolpyruvyl moiety of phosphoenolpyruvate (PEP) to the 5-hydroxyl of shikimate-3-phosphate (S3P) to produce enolpyruvyl shikimate-3-phosphate and inorganic phosphate. The protein is 3-phosphoshikimate 1-carboxyvinyltransferase of Bacteroides fragilis (strain YCH46).